The following is a 584-amino-acid chain: PE-PGRS family protein PE_PGRS11 (584 aa).

Residues 1-92 (MSFVIVARDA…AATSYAVTEV (92 aa)) enclose the PE domain. Residue His-290 is the Tele-phosphohistidine intermediate of the active site. Glu-365 serves as the catalytic Proton donor/acceptor. The interval 384–584 (YLVGPIAWTL…LPIGLPSLIP (201 aa)) is phosphoglycerate mutase.

It in the N-terminal section; belongs to the mycobacterial PE family. PGRS subfamily. This sequence in the C-terminal section; belongs to the phosphoglycerate mutase family. As to quaternary structure, interacts with human TLR2. It depends on Mg(2+) as a cofactor.

The protein resides in the secreted. It is found in the cell wall. Its subcellular location is the cell surface. It carries out the reaction (2R)-2-phosphoglycerate = (2R)-3-phosphoglycerate. In terms of biological role, induces maturation and activation of human dendritic cells (DCs), via TLR2-dependent activation of ERK1/2, p38 MAPK, and NF-kappa-B signaling pathways, and enhances the ability of DCs to stimulate CD4(+) T cells. By activating DCs, could potentially contribute to the initiation of innate immune responses during tuberculosis infection and hence regulate the clinical course of tuberculosis. Involved in resistance to oxidative stress, via TLR2-dependent activation of the PI3K-ERK1/2-NF-kappa-B signaling pathway and expression of COX-2 and Bcl2. Also abolishes H(2)O(2)-triggered activation of p38 MAPK. In Mycobacterium tuberculosis (strain ATCC 25618 / H37Rv), this protein is PE-PGRS family protein PE_PGRS11.